The following is a 560-amino-acid chain: Bifunctional NAD(P)H-hydrate repair enzyme (560 aa).

The segment at 1-241 (MLSRLSERCS…WMTAPERMRA (241 aa)) is NAD(P)H-hydrate epimerase. One can recognise a YjeF N-terminal domain in the interval 29–235 (LRDAEPAAAA…SLGLEDWMTA (207 aa)). The tract at residues 77–81 (NNGGD) is NADPHX 1; for epimerase activity. K(+) contacts are provided by Asn78 and Asp145. The tract at residues 149-155 (GTGICGP) is NADPHX 1; for epimerase activity. (6S)-NADPHX is bound by residues Tyr160 and Asp178. Ser181 is a binding site for K(+). One can recognise a YjeF C-terminal domain in the interval 249–547 (LDDVYEYFGI…HRVPLIVNAS (299 aa)). The tract at residues 249-560 (LDDVYEYFGI…PATRQRSSGP (312 aa)) is ADP-dependent (S)-NAD(P)H-hydrate dehydratase. Gly351 serves as a coordination point for (6S)-NADPHX. The segment at 417-423 (HPGEAAR) is NADPHX 2; for dehydratase activity. ADP is bound by residues 454–458 (KGPGT) and 475–484 (NAGMASGGMG). Residue Asp485 coordinates (6S)-NADPHX.

The protein in the N-terminal section; belongs to the NnrE/AIBP family. This sequence in the C-terminal section; belongs to the NnrD/CARKD family. The cofactor is K(+).

It carries out the reaction (6S)-NADHX + ADP = AMP + phosphate + NADH + H(+). The catalysed reaction is (6S)-NADPHX + ADP = AMP + phosphate + NADPH + H(+). The enzyme catalyses (6R)-NADHX = (6S)-NADHX. It catalyses the reaction (6R)-NADPHX = (6S)-NADPHX. Bifunctional enzyme that catalyzes the epimerization of the S- and R-forms of NAD(P)HX and the dehydration of the S-form of NAD(P)HX at the expense of ADP, which is converted to AMP. This allows the repair of both epimers of NAD(P)HX, a damaged form of NAD(P)H that is a result of enzymatic or heat-dependent hydration. The sequence is that of Bifunctional NAD(P)H-hydrate repair enzyme from Leishmania infantum.